A 414-amino-acid polypeptide reads, in one-letter code: Triose phosphate/phosphate translocator, chloroplastic (414 aa).

The transit peptide at 1–78 directs the protein to the chloroplast; the sequence is MESRVLTGGA…ILLETSPKRE (78 aa). Over 79 to 108 the chain is Chloroplast intermembrane; the sequence is SIKPCSAAASSSAGSSDSSGDAKVGFFNKA. Residues 109 to 129 traverse the membrane as a helical segment; that stretch reads TLTTGFFFFMWYFLNVIFNIL. Residues 130-141 lie on the Lumenal side of the membrane; that stretch reads NKKIYNYFPYPY. Residues 142-162 form a helical membrane-spanning segment; it reads FVSVIHLAVGVVYCLVSWGVG. At 163–219 the chain is on the chloroplast intermembrane side; the sequence is LPKRAPIDSTQLKLLTPVAFCHALGHVTSNVSFAAVRVSFTHTVKALEPFFNAAASQ. A helical transmembrane segment spans residues 220–240; the sequence is FILGQQIPLALWLSLAPVVLG. The Lumenal segment spans residues 241–284; sequence VSMASLTELSFNWLGFTSAMISNISFTYRSIYSKKAMTDMDSTN. A helical transmembrane segment spans residues 285-304; that stretch reads VYAYISIIALIFCLPPAIFI. The Chloroplast intermembrane segment spans residues 305 to 382; it reads EGPQLLQHGF…VIFGNKISTQ (78 aa). The chain crosses the membrane as a helical span at residues 383-403; it reads TGIGTCIAIAGVAIYSFIKAK. Over 404–414 the chain is Lumenal; it reads MEEEKRQKKAA.

It belongs to the TPT transporter family. TPT (TC 2.A.7.9) subfamily.

It localises to the plastid. Its subcellular location is the chloroplast membrane. Functionally, mediates the export of fixed carbons from the chloroplasts into the cytosol in the form of triose phosphates. This chain is Triose phosphate/phosphate translocator, chloroplastic (TPT), found in Solanum tuberosum (Potato).